A 79-amino-acid polypeptide reads, in one-letter code: CATR tumorigenic conversion 1 protein (79 aa).

In Homo sapiens (Human), this protein is CATR tumorigenic conversion 1 protein (CATR1).